Consider the following 1997-residue polypeptide: Receptor-type tyrosine-protein phosphatase beta (1997 aa).

The N-terminal stretch at 1-22 (MLSHGAGLALWITLSLLQTGLA) is a signal peptide. Fibronectin type-III domains are found at residues 23–111 (EPER…TDPL), 112–207 (PPAR…SPVK), 203–288 (PSPV…VRTA), 291–378 (EVSN…TFPD), 379–471 (KVAN…LAVL), 467–552 (PLAV…KGRT), 556–641 (QVTD…EGRT), 642–729 (VPSS…QERT), 730–829 (VPDK…TLRN), 819–906 (PEPV…GFTV), 909–1001 (AVKN…VQGV), 995–1083 (PASV…EGRT), 1087–1175 (AVTD…VPAS), 1173–1260 (PASV…SRTA), 1260–1356 (APSP…TKPD), 1357–1448 (KIQN…IDRP), and 1458–1554 (NEKD…EMES). Topologically, residues 23-1621 (EPERCNFTLA…ESEPLFGAIE (1599 aa)) are extracellular. Residues N28, N53, N75, N172, N198, N267, N321, N414, N421, N479, N544, N574, N598, N652, N721, and N829 are each glycosylated (N-linked (GlcNAc...) asparagine). N1040, N1096, N1163, N1185, N1212, N1274, N1367, N1470, N1474, and N1518 each carry an N-linked (GlcNAc...) asparagine glycan. The helical transmembrane segment at 1622–1642 (GVSAGLFLIGMLVAVVALLIC) threads the bilayer. The Cytoplasmic portion of the chain corresponds to 1643–1997 (RQKVSHGRER…YHRDPVYSRH (355 aa)). One can recognise a Tyrosine-protein phosphatase domain in the interval 1703–1963 (LSKEYEELKD…VYLHQCVRDV (261 aa)). Substrate is bound by residues D1870, 1904-1910 (CSAGVGR), and Q1948. C1904 (phosphocysteine intermediate) is an active-site residue. Phosphotyrosine is present on Y1981.

This sequence belongs to the protein-tyrosine phosphatase family. Receptor class 3 subfamily. Monomer. Interacts with TEK. Interacts via fibronectin type-III 17 domain with CDH5. Detected in a complex with CNTN1 and NRCAM. Interacts (phosphorylated form) with FYN and GRB2. Interacts with IGFBP2.

The protein localises to the membrane. The catalysed reaction is O-phospho-L-tyrosyl-[protein] + H2O = L-tyrosyl-[protein] + phosphate. Plays an important role in blood vessel remodeling and angiogenesis. Not necessary for the initial formation of blood vessels, but is essential for their maintenance and remodeling. Can induce dephosphorylation of TEK/TIE2, CDH5/VE-cadherin and KDR/VEGFR-2. Regulates angiopoietin-TIE2 signaling in endothelial cells. Acts as a negative regulator of TIE2, and controls TIE2 driven endothelial cell proliferation, which in turn affects blood vessel remodeling during embryonic development and determines blood vessel size during perinatal growth. Essential for the maintenance of endothelial cell contact integrity and for the adhesive function of VE-cadherin in endothelial cells and this requires the presence of plakoglobin. This chain is Receptor-type tyrosine-protein phosphatase beta (PTPRB), found in Homo sapiens (Human).